The following is a 548-amino-acid chain: Chaperonin GroEL (548 aa).

ATP is bound by residues 30–33 (TLGP), Lys-51, 87–91 (DGTTT), Gly-415, 479–481 (NAA), and Asp-495.

The protein belongs to the chaperonin (HSP60) family. Forms a cylinder of 14 subunits composed of two heptameric rings stacked back-to-back. Interacts with the co-chaperonin GroES.

The protein localises to the cytoplasm. The catalysed reaction is ATP + H2O + a folded polypeptide = ADP + phosphate + an unfolded polypeptide.. Together with its co-chaperonin GroES, plays an essential role in assisting protein folding. The GroEL-GroES system forms a nano-cage that allows encapsulation of the non-native substrate proteins and provides a physical environment optimized to promote and accelerate protein folding. This is Chaperonin GroEL from Klebsiella pneumoniae subsp. pneumoniae (strain ATCC 700721 / MGH 78578).